The sequence spans 551 residues: Seventh homolog of septin 1 (551 aa).

An N-acetylserine modification is found at Ser2. Residues 20 to 339 (RGITYTMLLC…ENYRSEKLSS (320 aa)) form the Septin-type G domain. The G1 motif stretch occupies residues 30-37 (GPAGTGKT). GTP is bound by residues 30 to 37 (GPAGTGKT), Gly138, 218 to 226 (RADSFTKEE), and Arg288. The interval 135–138 (MTHG) is G3 motif. The interval 217–220 (TRAD) is G4 motif. The segment at 381–417 (NLRADTPRNQVSGNFKENEYEDNGEHDSAENEQEMSP) is disordered. Tyr400 carries the post-translational modification Phosphotyrosine. 2 positions are modified to phosphoserine: Ser408 and Ser416. A coiled-coil region spans residues 418–518 (VRQLGREIKQ…KLINQNKLNG (101 aa)). Residues Lys426 and Lys437 each participate in a glycyl lysine isopeptide (Lys-Gly) (interchain with G-Cter in SUMO) cross-link. Phosphoserine is present on residues Ser447, Ser460, Ser519, Ser520, Ser522, and Ser525. Residues 515 to 551 (KLNGSSSSINSLQQSTRSQIKKNDTYTDLASIASGRD) form a disordered region. Residues 519–532 (SSSSINSLQQSTRS) are compositionally biased toward low complexity. Thr539 is subject to Phosphothreonine. Phosphoserine occurs at positions 545 and 548.

It belongs to the TRAFAC class TrmE-Era-EngA-EngB-Septin-like GTPase superfamily. Septin GTPase family. As to quaternary structure, component of the septin complex which consists of CDC3, CDC10, CDC11, CDC12 and probably SHS1 and rearranges to a cortical collar of highly ordered filaments at the mother-bud-neck. A complex formed by CDC3, CDC10, CDC11 and CDC12 is capable of forming long filaments in vitro and the components seem to be present in a 2:2:2:2 arrangement in vivo. The filaments are proposed to be formed by the end-to-end polymerization of CDC3-CDC12-CDC11 complexes with CDC10 serving as a bridge to bundle the polymers into paired filaments. Component of the GIN4 complex composed of at least BNI5, CDC3, CDC10, CDC11, CDC12, GIN4, NAP1 and SHS1. Self-associates. Interacts with CDC11 and SPA2. Phosphorylated by GIN4 and CLA4. Phosphorylation state is essential for septin ring dynamics during telophase. In terms of processing, sumoylated during mitosis on the mother cell side of the bud neck. Sumoylation probably plays a central role in regulating septin ring disassembly during the cell cycle.

Its subcellular location is the membrane. The protein localises to the bud neck. Functionally, septins are GTPases involved in cytokinesis that assemble early in the cell cycle as a patch at the incipient bud site and form a ring approximately 15 minutes before bud emergence, which transforms into an hour-glass shaped collar of cortical filaments that spans both sides of the mother-bud neck. This collar persists until just before cytokinesis, when it splits into two rings that occupy opposite sides of the neck. The septins at the bud neck serve as a structural scaffold that recruits different components involved in diverse processes at specific stages during the cell cycle. Many proteins bind asymmetrically to the septin collar. The septin assembly is regulated by protein kinases GIN4 and/or CLA4. May act by recruiting MYO1 and HOF1, a protein involved in septation, to the site of cleavage. Septins are also involved in cell morphogenesis, bud site selection, chitin deposition, cell cycle regulation, cell compartmentalization and spore wall formation. CDCd11 with SHS1 11 are involved in the recruitment of BNI5 and thereby ensure efficient localization at the bud neck of MYO1, the type II myosin of the actomyosin contractile ring. In Saccharomyces cerevisiae (strain ATCC 204508 / S288c) (Baker's yeast), this protein is Seventh homolog of septin 1.